A 193-amino-acid chain; its full sequence is MNTYKNSLNHFLNLVDCLEKIPNVGKKSAFKMAYHLGLENPYLALKITHALENALENLKTCSSCNALSESEVCEICSDESRQNSQLCMVLHPRDVFILEDLKDFLGRYYVLNSIEEVDFNALEKRLIEENIKEIIFAFPPTLANDSLMLYIEDKLQRFHLTFTKIAQGVPTGVNFENIDSVSLSRAFNSRIKA.

Residues 61–76 (CSSCNALSESEVCEIC) form a C4-type zinc finger. Residues 84–170 (SQLCMVLHPR…TFTKIAQGVP (87 aa)) form the Toprim domain.

This sequence belongs to the RecR family.

In terms of biological role, may play a role in DNA repair. It seems to be involved in an RecBC-independent recombinational process of DNA repair. It may act with RecF and RecO. This is Recombination protein RecR from Helicobacter pylori (strain G27).